The chain runs to 145 residues: D-aminoacyl-tRNA deacylase (145 aa).

The Gly-cisPro motif, important for rejection of L-amino acids signature appears at 137–138; the sequence is GP.

It belongs to the DTD family. In terms of assembly, homodimer.

It is found in the cytoplasm. The catalysed reaction is glycyl-tRNA(Ala) + H2O = tRNA(Ala) + glycine + H(+). It catalyses the reaction a D-aminoacyl-tRNA + H2O = a tRNA + a D-alpha-amino acid + H(+). Its function is as follows. An aminoacyl-tRNA editing enzyme that deacylates mischarged D-aminoacyl-tRNAs. Also deacylates mischarged glycyl-tRNA(Ala), protecting cells against glycine mischarging by AlaRS. Acts via tRNA-based rather than protein-based catalysis; rejects L-amino acids rather than detecting D-amino acids in the active site. By recycling D-aminoacyl-tRNA to D-amino acids and free tRNA molecules, this enzyme counteracts the toxicity associated with the formation of D-aminoacyl-tRNA entities in vivo and helps enforce protein L-homochirality. This is D-aminoacyl-tRNA deacylase from Salmonella typhimurium (strain LT2 / SGSC1412 / ATCC 700720).